We begin with the raw amino-acid sequence, 431 residues long: Urokinase-type plasminogen activator (431 aa).

The first 20 residues, 1–20 (MRALLARLLLCVLVVSDSKG), serve as a signal peptide directing secretion. Residues 27-63 (VPSNCDCLNGGTCVSNKYFSNIHWCNCPKKFGGQHCE) enclose the EGF-like domain. 6 cysteine pairs are disulfide-bonded: C31–C39, C33–C51, C53–C62, C70–C151, C91–C133, and C122–C146. Residues 34 to 57 (LNGGTCVSNKYFSNIHWCNCPKKF) are binds urokinase plasminogen activator surface receptor. In terms of domain architecture, Kringle spans 69 to 151 (TCYEGNGHFY…LVQECMVHDC (83 aa)). The tract at residues 152-178 (ADGKKPSSPPEELKFQCGQKTLRPRFK) is connecting peptide. Position 158 is a phosphoserine (S158). Disulfide bonds link C168–C299, C209–C225, C217–C288, C313–C382, C345–C361, and C372–C400. Positions 179–424 (IVGGEFTTIE…FLPWIRSHTK (246 aa)) constitute a Peptidase S1 domain. Active-site charge relay system residues include H224 and D275. N322 carries N-linked (GlcNAc...) asparagine glycosylation. S323 carries the post-translational modification Phosphoserine. Catalysis depends on S376, which acts as the Charge relay system.

Belongs to the peptidase S1 family. As to quaternary structure, found in high and low molecular mass forms. Each consists of two chains, A and B. The high molecular mass form contains a long chain A which is cleaved to yield a short chain A. Forms heterodimer with SERPINA5. Binds LRP1B; binding is followed by internalization and degradation. Interacts with MRC2. Interacts with PLAUR. In complex with SERPINE1, interacts with PLAUR/uPAR. Interacts with SORL1 and LRP1, either alone or in complex with SERPINE1; these interactions are abolished in the presence of LRPAP1/RAP. The ternary complex composed of PLAUR-PLAU-PAI1 also interacts with SORLA. Phosphorylation of Ser-158 and Ser-323 abolishes proadhesive ability but does not interfere with receptor binding. Post-translationally, produced as an inactive single-chain protein (pro-uPA or sc-uPA), is processed into the active disulfide-linked two-chain form of PLAU/uPA by a proteolytic event mediated, at least, by TMPRSS4.

It localises to the secreted. The enzyme catalyses Specific cleavage of Arg-|-Val bond in plasminogen to form plasmin.. Inhibited by SERPINA5. Inhibited by SERPINE1. Specifically cleaves the zymogen plasminogen to form the active enzyme plasmin. This chain is Urokinase-type plasminogen activator (PLAU), found in Pongo abelii (Sumatran orangutan).